We begin with the raw amino-acid sequence, 72 residues long: Large ribosomal subunit protein uL29 (72 aa).

This sequence belongs to the universal ribosomal protein uL29 family.

The polypeptide is Large ribosomal subunit protein uL29 (Microcystis aeruginosa (strain NIES-843 / IAM M-2473)).